Here is an 877-residue protein sequence, read N- to C-terminus: Alanine--tRNA ligase (877 aa).

Zn(2+) contacts are provided by His567, His571, Cys669, and His673.

Belongs to the class-II aminoacyl-tRNA synthetase family. Zn(2+) serves as cofactor.

The protein localises to the cytoplasm. The enzyme catalyses tRNA(Ala) + L-alanine + ATP = L-alanyl-tRNA(Ala) + AMP + diphosphate. Its function is as follows. Catalyzes the attachment of alanine to tRNA(Ala) in a two-step reaction: alanine is first activated by ATP to form Ala-AMP and then transferred to the acceptor end of tRNA(Ala). Also edits incorrectly charged Ser-tRNA(Ala) and Gly-tRNA(Ala) via its editing domain. This chain is Alanine--tRNA ligase, found in Rickettsia rickettsii (strain Iowa).